A 173-amino-acid chain; its full sequence is Shikimate kinase 1 (173 aa).

14 to 19 (GAGKST) serves as a coordination point for ATP. Position 18 (S18) interacts with Mg(2+). Residues D36, R60, and G82 each contribute to the substrate site. ATP is bound at residue R120. Residue R140 participates in substrate binding. Q157 is a binding site for ATP.

It belongs to the shikimate kinase family. Monomer. Requires Mg(2+) as cofactor.

It localises to the cytoplasm. It carries out the reaction shikimate + ATP = 3-phosphoshikimate + ADP + H(+). Its pathway is metabolic intermediate biosynthesis; chorismate biosynthesis; chorismate from D-erythrose 4-phosphate and phosphoenolpyruvate: step 5/7. Its function is as follows. Catalyzes the specific phosphorylation of the 3-hydroxyl group of shikimic acid using ATP as a cosubstrate. The chain is Shikimate kinase 1 from Enterobacter sp. (strain 638).